Here is a 513-residue protein sequence, read N- to C-terminus: 2-isopropylmalate synthase (513 aa).

The Pyruvate carboxyltransferase domain maps to 5-268; sequence LIIFDTTLRD…DIGVDTTQIV (264 aa). Mn(2+)-binding residues include aspartate 14, histidine 202, histidine 204, and asparagine 239. A regulatory domain region spans residues 394 to 513; sequence RFISLSQRSE…KAVQKINPQI (120 aa).

It belongs to the alpha-IPM synthase/homocitrate synthase family. LeuA type 1 subfamily. As to quaternary structure, homodimer. Mn(2+) serves as cofactor.

It is found in the cytoplasm. It catalyses the reaction 3-methyl-2-oxobutanoate + acetyl-CoA + H2O = (2S)-2-isopropylmalate + CoA + H(+). Its pathway is amino-acid biosynthesis; L-leucine biosynthesis; L-leucine from 3-methyl-2-oxobutanoate: step 1/4. Catalyzes the condensation of the acetyl group of acetyl-CoA with 3-methyl-2-oxobutanoate (2-ketoisovalerate) to form 3-carboxy-3-hydroxy-4-methylpentanoate (2-isopropylmalate). The sequence is that of 2-isopropylmalate synthase from Cupriavidus necator (strain ATCC 17699 / DSM 428 / KCTC 22496 / NCIMB 10442 / H16 / Stanier 337) (Ralstonia eutropha).